Consider the following 128-residue polypeptide: Ribonuclease P protein component (128 aa).

This sequence belongs to the RnpA family. As to quaternary structure, consists of a catalytic RNA component (M1 or rnpB) and a protein subunit.

It carries out the reaction Endonucleolytic cleavage of RNA, removing 5'-extranucleotides from tRNA precursor.. Functionally, RNaseP catalyzes the removal of the 5'-leader sequence from pre-tRNA to produce the mature 5'-terminus. It can also cleave other RNA substrates such as 4.5S RNA. The protein component plays an auxiliary but essential role in vivo by binding to the 5'-leader sequence and broadening the substrate specificity of the ribozyme. This is Ribonuclease P protein component from Prochlorococcus marinus (strain MIT 9303).